The primary structure comprises 224 residues: Claudin-19 (224 aa).

Residues 1-7 (MANSGLQ) lie on the Cytoplasmic side of the membrane. The helical transmembrane segment at 8–28 (LLGYFLALGGWVGIIASTALP) threads the bilayer. The Extracellular segment spans residues 29–81 (QWKQSSYAGDAIITAVGLYEGLWMSCASQSTGQVQCKLYDSLLALDGHIQSAR). Cys-54 and Cys-64 are joined by a disulfide. Residues 82 to 102 (ALMVVAVLLGFVAMVLSVVGM) form a helical membrane-spanning segment. Over 103–117 (KCTRVGDSNPTAKGR) the chain is Cytoplasmic. The chain crosses the membrane as a helical span at residues 118–138 (VAISGGALFLLAGLCTLTAVS). Residues 139 to 160 (WYATLVTQEFFNPSTPVNARYE) lie on the Extracellular side of the membrane. A helical transmembrane segment spans residues 161 to 181 (FGPALFVGWASAGLAILGGSF). At 182 to 224 (LCCTCPEPERANSIPQPYRSGPSTAAREPVVKLSTSVKGPLGV) the chain is on the cytoplasmic side.

The protein belongs to the claudin family. As to quaternary structure, can form homo- and heteropolymeric tight junction strands. Interacts with other claudins including CLDN3, CLDN10, CLDN16 and CLDN18 with highest affinity for CLDN16. Interacts (via PDZ-binding motif TRV) with TJP1 (via PDZ domain).

Its subcellular location is the cell junction. It localises to the tight junction. The protein localises to the cell membrane. The catalysed reaction is Mg(2+)(in) = Mg(2+)(out). It catalyses the reaction Ca(2+)(in) = Ca(2+)(out). The enzyme catalyses Na(+)(in) = Na(+)(out). It carries out the reaction K(+)(in) = K(+)(out). The catalysed reaction is Rb(+)(in) = Rb(+)(out). It catalyses the reaction Cs(+)(in) = Cs(+)(out). The enzyme catalyses Li(+)(in) = Li(+)(out). Forms paracellular channels: coassembles with CLDN16 into tight junction strands with cation-selective channels through the strands, conveying epithelial permeability in a process known as paracellular tight junction permeability. Involved in the maintenance of ion gradients along the nephron. In the thick ascending limb (TAL) of Henle's loop, facilitates sodium paracellular permeability from the interstitial compartment to the lumen, contributing to the lumen-positive transepithelial potential that drives paracellular magnesium and calcium reabsorption. Forms paracellular barriers on its own. In the peripheral nervous system, represents a major constituent of the tight junctions in Schwann cells and contributes to electrical sealing. During retinal neurogenesis, may regulate the barrier properties of tight junctions in retinal pigment epithelium, required for proper retinal tissue differentiation and vision. The chain is Claudin-19 from Rattus norvegicus (Rat).